The chain runs to 69 residues: Large ribosomal subunit protein uL29 (69 aa).

It belongs to the universal ribosomal protein uL29 family.

The polypeptide is Large ribosomal subunit protein uL29 (Polaromonas sp. (strain JS666 / ATCC BAA-500)).